A 105-amino-acid chain; its full sequence is D-galactoside-specific lectin (105 aa).

Residues 13 to 103 (VCEDSSLTIS…KYLAVTYICS (91 aa)) enclose the SUEL-type lectin domain.

As to quaternary structure, homodimer; disulfide-linked.

The protein localises to the cytoplasm. Functionally, this protein binds D-galactoside. May have an important role in the activation of eggs (triggered by fertilization), or in their subsequent differentiation. The dimeric form is essential for hemagglutination activity. In Heliocidaris crassispina (Sea urchin), this protein is D-galactoside-specific lectin.